We begin with the raw amino-acid sequence, 329 residues long: Sex comb on midleg-like protein 1 (329 aa).

Residues 136-160 (SYSPTLPVSRRENNSPSNLPRPSFC) form a disordered region. Residues Ser138 and Ser238 each carry the phosphoserine modification. The SAM domain occupies 258-325 (WSVEAVVLFL…YYIDRLKQGK (68 aa)).

It belongs to the SCM family.

The protein localises to the nucleus. Functionally, putative Polycomb group (PcG) protein. PcG proteins act by forming multiprotein complexes, which are required to maintain the transcriptionally repressive state of homeotic genes throughout development. May be involved in spermatogenesis during sexual maturation. The chain is Sex comb on midleg-like protein 1 (SCML1) from Pongo pygmaeus (Bornean orangutan).